The following is a 1136-amino-acid chain: Probable phospholipid-transporting ATPase IIB (1136 aa).

The Cytoplasmic portion of the chain corresponds to Met1 to Thr145. A helical transmembrane segment spans residues Phe146–Val166. The Extracellular segment spans residues Ser167 to Ala174. Residues Leu175–Ile195 traverse the membrane as a helical segment. The Cytoplasmic segment spans residues Met196–Lys383. Residues Ala384–Gly404 form a helical membrane-spanning segment. At Pro405–Arg408 the chain is on the extracellular side. A helical membrane pass occupies residues Ser409 to Leu429. Residues Asp430–Gly939 lie on the Cytoplasmic side of the membrane. Asp469 serves as the catalytic 4-aspartylphosphate intermediate. Positions 469, 470, and 471 each coordinate ATP. A Mg(2+)-binding site is contributed by Asp469. Thr471 serves as a coordination point for Mg(2+). A disordered region spans residues Ala514 to Val538. Glu591, Phe633, Lys638, Lys657, Arg686, Thr687, Thr766, Gly767, Asp768, Arg848, and Lys854 together coordinate ATP. Position 874 (Asp874) interacts with Mg(2+). Residues Asn877 and Asp878 each coordinate ATP. Asp878 lines the Mg(2+) pocket. A helical membrane pass occupies residues Leu940 to Leu960. Residues Tyr961–Gln962 are Extracellular-facing. The helical transmembrane segment at Gly963–Leu983 threads the bilayer. The Cytoplasmic segment spans residues Asp984 to Thr1012. A helical transmembrane segment spans residues Phe1013–Val1033. At Leu1034 to His1041 the chain is on the extracellular side. Residues Val1042–Val1062 traverse the membrane as a helical segment. Residues Arg1063–His1066 lie on the Cytoplasmic side of the membrane. A helical transmembrane segment spans residues Trp1067–Leu1087. Topologically, residues Asn1088 to Thr1098 are extracellular. Residues Val1099–Leu1119 form a helical membrane-spanning segment. Topologically, residues Lys1120 to Ser1136 are cytoplasmic.

Belongs to the cation transport ATPase (P-type) (TC 3.A.3) family. Type IV subfamily. It depends on Mg(2+) as a cofactor.

The protein resides in the golgi apparatus. The protein localises to the trans-Golgi network membrane. It catalyses the reaction ATP + H2O + phospholipidSide 1 = ADP + phosphate + phospholipidSide 2.. The chain is Probable phospholipid-transporting ATPase IIB (ATP9B) from Bos taurus (Bovine).